Here is a 1083-residue protein sequence, read N- to C-terminus: UPF0182 protein BAD_0641 (1083 aa).

Residues 1–72 (MSFFDMFGPM…TSKPNRPRKP (72 aa)) are disordered. The next 7 membrane-spanning stretches (helical) occupy residues 78-98 (IFIG…ALAQ), 125-145 (LWLA…TLAI), 178-198 (IAVV…NANW), 239-259 (SLLL…MGGI), 281-301 (IGIW…LGVF), 325-345 (VTFI…LWIM), and 372-392 (VAIA…PVLL). Positions 976–1061 (DSGASAGDAE…SDAAMKKGDW (86 aa)) are disordered. Basic and acidic residues-rich tracts occupy residues 991–1013 (TDDK…DGKQ) and 1050–1060 (KDSDAAMKKGD).

It belongs to the UPF0182 family.

It is found in the cell membrane. This Bifidobacterium adolescentis (strain ATCC 15703 / DSM 20083 / NCTC 11814 / E194a) protein is UPF0182 protein BAD_0641.